A 631-amino-acid polypeptide reads, in one-letter code: Phosphomethylpyrimidine synthase (631 aa).

Residues asparagine 239, methionine 268, tyrosine 297, histidine 333, 353–355, 394–397, and glutamate 433 contribute to the substrate site; these read SRG and DGLR. Histidine 437 lines the Zn(2+) pocket. Tyrosine 460 contacts substrate. Histidine 501 provides a ligand contact to Zn(2+). 3 residues coordinate [4Fe-4S] cluster: cysteine 581, cysteine 584, and cysteine 589.

This sequence belongs to the ThiC family. Homodimer. The cofactor is [4Fe-4S] cluster.

It carries out the reaction 5-amino-1-(5-phospho-beta-D-ribosyl)imidazole + S-adenosyl-L-methionine = 4-amino-2-methyl-5-(phosphooxymethyl)pyrimidine + CO + 5'-deoxyadenosine + formate + L-methionine + 3 H(+). It participates in cofactor biosynthesis; thiamine diphosphate biosynthesis. Catalyzes the synthesis of the hydroxymethylpyrimidine phosphate (HMP-P) moiety of thiamine from aminoimidazole ribotide (AIR) in a radical S-adenosyl-L-methionine (SAM)-dependent reaction. This chain is Phosphomethylpyrimidine synthase, found in Shigella flexneri serotype 5b (strain 8401).